The primary structure comprises 435 residues: Dual specificity protein kinase FUZ7 (435 aa).

Residues Met-1 to Pro-61 form a disordered region. A compositionally biased stretch (polar residues) spans Ala-46–Val-59. In terms of domain architecture, Protein kinase spans Leu-109–Val-417. ATP-binding positions include Leu-115–Val-123 and Lys-138. Asp-231 functions as the Proton acceptor in the catalytic mechanism. The interval Asn-307–Gly-359 is disordered.

This sequence belongs to the protein kinase superfamily. STE Ser/Thr protein kinase family. MAP kinase kinase subfamily.

It catalyses the reaction L-seryl-[protein] + ATP = O-phospho-L-seryl-[protein] + ADP + H(+). The enzyme catalyses L-threonyl-[protein] + ATP = O-phospho-L-threonyl-[protein] + ADP + H(+). It carries out the reaction L-tyrosyl-[protein] + ATP = O-phospho-L-tyrosyl-[protein] + ADP + H(+). Protein kinase that is necessary for a-locus-dependent processes, such as conjugation tube formation, filament formation, and maintenance of filamentous growth, and for a-locus-independent processes, such as tumor induction and teliospore germination. This Mycosarcoma maydis (Corn smut fungus) protein is Dual specificity protein kinase FUZ7 (FUZ7).